We begin with the raw amino-acid sequence, 1301 residues long: Zinc finger protein 532 (1301 aa).

Disordered regions lie at residues 26–206, 223–266, and 281–366; these read PKAA…RETE, AEDK…SSSK, and KAAS…IKTI. Residues 32 to 52 show a composition bias toward basic and acidic residues; that stretch reads SGHDDHESHMKQNAHGEDDSH. A compositionally biased stretch (polar residues) spans 84–101; the sequence is PTGNGLHNGFLTASSLDS. A compositionally biased stretch (basic and acidic residues) spans 102-111; the sequence is YSKDGAKSLK. The segment covering 122 to 133 has biased composition (polar residues); sequence KDSTFSQFSPIS. 3 positions are modified to phosphoserine: Ser130, Ser133, and Ser134. The span at 136–151 shows a compositional bias: acidic residues; the sequence is EEFDDDEKIEVDDPPD. Residues 158–170 show a composition bias toward polar residues; that stretch reads SFRSNVLTGSAPQ. Position 175 is an N6-acetyllysine (Lys175). Residues 182–195 are compositionally biased toward polar residues; that stretch reads ENSSKTGLSTSGNV. Basic and acidic residues-rich tracts occupy residues 196–206 and 223–250; these read EKNKAVKRETE and AEDK…EKND. Thr205 carries the post-translational modification Phosphothreonine. Residues Ser252, Ser307, and Ser314 each carry the phosphoserine modification. The span at 303–315 shows a compositional bias: basic and acidic residues; the sequence is EVNDSPRAADKSP. Over residues 337–359 the composition is skewed to low complexity; that stretch reads SISSENSSKGSPSSPAGSTPAIP. Phosphoserine is present on Ser434. Residues Lys459 and Lys516 each participate in a glycyl lysine isopeptide (Lys-Gly) (interchain with G-Cter in SUMO2) cross-link. The C2H2-type 1; degenerate zinc-finger motif lies at 616 to 635; sequence YKCLECGDSFALEKSLTQHY. The C2H2-type 2; degenerate zinc finger occupies 754-779; sequence LKCLECNEVFQDETSLATHFQQAADT. 5 consecutive C2H2-type zinc fingers follow at residues 783–805, 842–865, 870–893, 905–927, and 936–959; these read KTCT…QRIH, FRCV…QGSH, YKCP…YTQH, YKCS…FDQH, and FKCP…KSMH. A Glycyl lysine isopeptide (Lys-Gly) (interchain with G-Cter in SUMO2) cross-link involves residue Lys980. The interval 983–1017 is disordered; it reads TQNSANQNKEDTKSMNGKEKLEKKSPSPVKKSMET. The span at 990–1017 shows a compositional bias: basic and acidic residues; that stretch reads NKEDTKSMNGKEKLEKKSPSPVKKSMET. 2 consecutive C2H2-type zinc fingers follow at residues 1025-1048 and 1055-1078; these read WTCW…RKEH and HPCR…RIKH. The C2H2-type 10; degenerate zinc finger occupies 1085 to 1111; that stretch reads YACSHCPDSRRTFTKRLMLEKHVQLMH. Ser1140 carries the post-translational modification Phosphoserine. Glycyl lysine isopeptide (Lys-Gly) (interchain with G-Cter in SUMO2) cross-links involve residues Lys1144 and Lys1167. The segment at 1203-1226 adopts a C2H2-type 11 zinc-finger fold; that stretch reads YQCRECGLCYTSHVSLSRHLFIVH. The interval 1230–1263 is disordered; that stretch reads EPQPVSKQNGAGEDNQQENKPSHEDESPDGAVSD. A C2H2-type 12 zinc finger spans residues 1264–1286; the sequence is RKCKVCAKTFETEAALNTHMRTH.

This sequence belongs to the krueppel C2H2-type zinc-finger protein family.

Its subcellular location is the nucleus. Functionally, may be involved in transcriptional regulation. The sequence is that of Zinc finger protein 532 (ZNF532) from Homo sapiens (Human).